We begin with the raw amino-acid sequence, 662 residues long: UvrABC system protein B (662 aa).

The region spanning 31-188 is the Helicase ATP-binding domain; it reads DNIEGGEKAQ…NDLVDIQFER (158 aa). Position 44–51 (44–51) interacts with ATP; the sequence is GATGTGKT. Residues 97 to 120 carry the Beta-hairpin motif; it reads YYDYYQPEAYVPSSDTYIEKDSSV. Residues 435–601 form the Helicase C-terminal domain; it reads QIDDLLGEIN…TIKKEIRDLI (167 aa). The 36-residue stretch at 626 to 661 folds into the UVR domain; sequence KELVKKLEKQMQEAVEVLDFELAAQIRDMMLEVKAL.

The protein belongs to the UvrB family. In terms of assembly, forms a heterotetramer with UvrA during the search for lesions. Interacts with UvrC in an incision complex.

It localises to the cytoplasm. In terms of biological role, the UvrABC repair system catalyzes the recognition and processing of DNA lesions. A damage recognition complex composed of 2 UvrA and 2 UvrB subunits scans DNA for abnormalities. Upon binding of the UvrA(2)B(2) complex to a putative damaged site, the DNA wraps around one UvrB monomer. DNA wrap is dependent on ATP binding by UvrB and probably causes local melting of the DNA helix, facilitating insertion of UvrB beta-hairpin between the DNA strands. Then UvrB probes one DNA strand for the presence of a lesion. If a lesion is found the UvrA subunits dissociate and the UvrB-DNA preincision complex is formed. This complex is subsequently bound by UvrC and the second UvrB is released. If no lesion is found, the DNA wraps around the other UvrB subunit that will check the other stand for damage. The polypeptide is UvrABC system protein B (Streptococcus pneumoniae (strain ATCC 700669 / Spain 23F-1)).